A 335-amino-acid polypeptide reads, in one-letter code: Urokinase plasminogen activator surface receptor (335 aa).

The first 22 residues, 1–22, serve as a signal peptide directing secretion; sequence MGHPPLLPLLLLLHTCVPASWG. UPAR/Ly6 domains follow at residues 23–114, 115–213, and 214–305; these read LRCM…RSRY, LECI…PQNG, and RQCY…YRSG. Cystine bridges form between cysteine 25/cysteine 46, cysteine 28/cysteine 34, and cysteine 39/cysteine 67. Asparagine 74 carries an N-linked (GlcNAc...) asparagine glycan. 11 disulfide bridges follow: cysteine 93-cysteine 98, cysteine 117-cysteine 144, cysteine 120-cysteine 127, cysteine 137-cysteine 169, cysteine 175-cysteine 192, cysteine 193-cysteine 198, cysteine 216-cysteine 244, cysteine 219-cysteine 227, cysteine 237-cysteine 263, cysteine 269-cysteine 287, and cysteine 288-cysteine 293. An N-linked (GlcNAc...) asparagine glycan is attached at asparagine 124. Asparagine 184, asparagine 194, asparagine 222, and asparagine 255 each carry an N-linked (GlcNAc...) asparagine glycan. A lipid anchor (GPI-anchor amidated glycine) is attached at glycine 305. Residues 306–335 constitute a propeptide, removed in mature form; the sequence is AAPQPGPAHLSLTITLLMTARLWGGTLLWT.

As to quaternary structure, monomer. Interacts (via the UPAR/Ly6 domains) with SRPX2. Interacts with MRC2. Interacts with FAP (seprase); the interaction occurs at the cell surface of invadopodia membrane. Interacts with SORL1 (via N-terminal ectodomain); this interaction decreases PLAUR internalization. The ternary complex composed of PLAUR-PLAU-SERPINE1 also interacts with SORL1. Interacts with CD82; this interaction prevents PLAUR from binding to its high affinity ligand PLAU.

Its subcellular location is the cell membrane. The protein resides in the cell projection. It localises to the invadopodium membrane. Its function is as follows. Acts as a receptor for urokinase plasminogen activator. Plays a role in localizing and promoting plasmin formation. Mediates the proteolysis-independent signal transduction activation effects of U-PA. It is subject to negative-feedback regulation by U-PA which cleaves it into an inactive form. This Pan troglodytes (Chimpanzee) protein is Urokinase plasminogen activator surface receptor (PLAUR).